Consider the following 462-residue polypeptide: Nuclear factor interleukin-3-regulated protein (462 aa).

Lysine 24 is covalently cross-linked (Glycyl lysine isopeptide (Lys-Gly) (interchain with G-Cter in SUMO2)). The bZIP domain maps to 73–136 (DAMYWEKRRK…GLISSTAYAQ (64 aa)). Positions 79 to 95 (KRRKNNEAAKRSREKRR) are basic motif. The segment at 99-106 (LVLENKLI) is leucine-zipper. Disordered regions lie at residues 189–237 (DVSE…DDRG) and 258–302 (SPPL…IHSP). Over residues 201-210 (ESSVQGSCRS) the composition is skewed to polar residues. Lysine 214 is covalently cross-linked (Glycyl lysine isopeptide (Lys-Gly) (interchain with G-Cter in SUMO2)). Lysine 219 is covalently cross-linked (Glycyl lysine isopeptide (Lys-Gly) (interchain with G-Cter in SUMO1); alternate). Lysine 219 is covalently cross-linked (Glycyl lysine isopeptide (Lys-Gly) (interchain with G-Cter in SUMO2); alternate). Over residues 227–237 (SYTREPRDDRG) the composition is skewed to basic and acidic residues. Residues 264–274 (VNRSSSNSPRT) show a composition bias toward polar residues. Positions 299–363 (IHSPVELKHV…PIDMTSKRHF (65 aa)) are necessary for transcriptional repression and sufficient for interaction with DR1. The residue at position 301 (serine 301) is a Phosphoserine. Glycyl lysine isopeptide (Lys-Gly) (interchain with G-Cter in SUMO2) cross-links involve residues lysine 306, lysine 314, lysine 326, lysine 332, lysine 337, and lysine 350. The residue at position 353 (serine 353) is a Phosphoserine. Residues lysine 360, lysine 394, lysine 401, lysine 406, lysine 412, lysine 419, lysine 424, lysine 434, and lysine 448 each participate in a glycyl lysine isopeptide (Lys-Gly) (interchain with G-Cter in SUMO2) cross-link.

It belongs to the bZIP family. NFIL3 subfamily. In terms of assembly, homodimer. Binds DNA as a dimer. Interacts with DR1. Interacts with PER2 and CRY2. Interacts with NR0B2. Interacts with MYSM1. As to expression, expressed in bladder stomach, thyroid, spinal cord, lymph node, trachea, adrenal gland, bone marrow and muscle.

The protein resides in the nucleus. In terms of biological role, acts as a transcriptional regulator that recognizes and binds to the sequence 5'-[GA]TTA[CT]GTAA[CT]-3', a sequence present in many cellular and viral promoters. Represses transcription from promoters with activating transcription factor (ATF) sites. Represses promoter activity in osteoblasts. Represses transcriptional activity of PER1. Represses transcriptional activity of PER2 via the B-site on the promoter. Activates transcription from the interleukin-3 promoter in T-cells. Competes for the same consensus-binding site with PAR DNA-binding factors (DBP, HLF and TEF). Component of the circadian clock that acts as a negative regulator for the circadian expression of PER2 oscillation in the cell-autonomous core clock. Protects pro-B cells from programmed cell death. Represses the transcription of CYP2A5. Positively regulates the expression and activity of CES2 by antagonizing the repressive action of NR1D1 on CES2. Required for the development of natural killer cell precursors. This is Nuclear factor interleukin-3-regulated protein (NFIL3) from Homo sapiens (Human).